The primary structure comprises 390 residues: MLKFEILATDTSSHARRGTLTLNHGVVQTPIFMPVGTYGTVKGVMPRSLREMGAQIILGNTFHLWMRPGLDVMQSFGGLHGFEQWDKPILTDSGGFQVWSLGSMRKITEEGVHFASPVNGDKLFMSPEVSMQIQTTLNSDIVMQLDECTPYETNGHKTTEAEARKSMEMSRRWAVRSKNEFERLGNPNALFGIVQGGMYKNLRQESLEALVEMDFPGYAVGGVSVGEPKDEMLDIMAHTPHRLPAHKPRYLMGVGTPEDLVEGVAQGVDMFDCVMPTRNARNGTLFTRYGDLKIRNARHKTDHQPLDPSCTCHACAGTEGVSWNDGGRGGFSRAYLHHLDRCGEMLGPMLTTIHNLHYYLNLMREVREALDAGQFGAFRARFKAERARGV.

Catalysis depends on Asp92, which acts as the Proton acceptor. Substrate-binding positions include 92–96 (DSGGF), Asp146, Gln195, and Gly222. Positions 253–259 (GVGTPED) are RNA binding. Asp272 acts as the Nucleophile in catalysis. The RNA binding; important for wobble base 34 recognition stretch occupies residues 277-281 (TRNAR). Cys310, Cys312, Cys315, and His354 together coordinate Zn(2+).

This sequence belongs to the queuine tRNA-ribosyltransferase family. As to quaternary structure, homodimer. Within each dimer, one monomer is responsible for RNA recognition and catalysis, while the other monomer binds to the replacement base PreQ1. Requires Zn(2+) as cofactor.

The catalysed reaction is 7-aminomethyl-7-carbaguanine + guanosine(34) in tRNA = 7-aminomethyl-7-carbaguanosine(34) in tRNA + guanine. Its pathway is tRNA modification; tRNA-queuosine biosynthesis. Its function is as follows. Catalyzes the base-exchange of a guanine (G) residue with the queuine precursor 7-aminomethyl-7-deazaguanine (PreQ1) at position 34 (anticodon wobble position) in tRNAs with GU(N) anticodons (tRNA-Asp, -Asn, -His and -Tyr). Catalysis occurs through a double-displacement mechanism. The nucleophile active site attacks the C1' of nucleotide 34 to detach the guanine base from the RNA, forming a covalent enzyme-RNA intermediate. The proton acceptor active site deprotonates the incoming PreQ1, allowing a nucleophilic attack on the C1' of the ribose to form the product. After dissociation, two additional enzymatic reactions on the tRNA convert PreQ1 to queuine (Q), resulting in the hypermodified nucleoside queuosine (7-(((4,5-cis-dihydroxy-2-cyclopenten-1-yl)amino)methyl)-7-deazaguanosine). This chain is Queuine tRNA-ribosyltransferase, found in Acidovorax ebreus (strain TPSY) (Diaphorobacter sp. (strain TPSY)).